The primary structure comprises 59 residues: Phycobilisome degradation protein NblA (59 aa).

To chloroplast ycf18.

Its function is as follows. Involved in phycobilisome (PBS) degradation during nutrient deprivation. May mark the PBS for degradation by covalent association with PBS components or may disrupt the PBS via ionic interactions. This is Phycobilisome degradation protein NblA from Synechococcus elongatus (strain ATCC 33912 / PCC 7942 / FACHB-805) (Anacystis nidulans R2).